A 216-amino-acid polypeptide reads, in one-letter code: Large ribosomal subunit protein uL24m (216 aa).

Residues 1 to 9 (MRLSALLAL) constitute a mitochondrion transit peptide. The residue at position 24 (S24) is a Phosphoserine. The region spanning 56-89 (LFCGDRVEILEGKDAGKQGKVVQVIRQRNWVVVE) is the KOW domain.

Belongs to the universal ribosomal protein uL24 family. Component of the mitochondrial ribosome large subunit (39S) which comprises a 16S rRNA and about 50 distinct proteins.

It localises to the mitochondrion. The chain is Large ribosomal subunit protein uL24m (MRPL24) from Bos taurus (Bovine).